A 167-amino-acid chain; its full sequence is Peptide deformylase (167 aa).

2 residues coordinate Fe cation: cysteine 91 and histidine 133. Residue glutamate 134 is part of the active site. Histidine 137 is a binding site for Fe cation.

It belongs to the polypeptide deformylase family. Fe(2+) is required as a cofactor.

The catalysed reaction is N-terminal N-formyl-L-methionyl-[peptide] + H2O = N-terminal L-methionyl-[peptide] + formate. Removes the formyl group from the N-terminal Met of newly synthesized proteins. Requires at least a dipeptide for an efficient rate of reaction. N-terminal L-methionine is a prerequisite for activity but the enzyme has broad specificity at other positions. The chain is Peptide deformylase from Neisseria gonorrhoeae (strain ATCC 700825 / FA 1090).